The following is a 107-amino-acid chain: MILTTTEEVPGYAVGEVLGVVSGNTVRAKNVGRDITAGLKSLVGGELEEYTAMLADARTEAYNRMANAARDLGADAVVNVRFATSQTMAAAAELLAYGTAVKLVPRK.

Belongs to the UPF0145 family.

In Methanoculleus marisnigri (strain ATCC 35101 / DSM 1498 / JR1), this protein is UPF0145 protein Memar_1285.